The primary structure comprises 464 residues: ATP synthase subunit beta (464 aa).

152 to 159 is a binding site for ATP; the sequence is GGAGVGKT.

This sequence belongs to the ATPase alpha/beta chains family. F-type ATPases have 2 components, CF(1) - the catalytic core - and CF(0) - the membrane proton channel. CF(1) has five subunits: alpha(3), beta(3), gamma(1), delta(1), epsilon(1). CF(0) has three main subunits: a(1), b(2) and c(9-12). The alpha and beta chains form an alternating ring which encloses part of the gamma chain. CF(1) is attached to CF(0) by a central stalk formed by the gamma and epsilon chains, while a peripheral stalk is formed by the delta and b chains.

The protein resides in the cell membrane. The catalysed reaction is ATP + H2O + 4 H(+)(in) = ADP + phosphate + 5 H(+)(out). Produces ATP from ADP in the presence of a proton gradient across the membrane. The catalytic sites are hosted primarily by the beta subunits. This Ureaplasma parvum serovar 3 (strain ATCC 27815 / 27 / NCTC 11736) protein is ATP synthase subunit beta.